A 205-amino-acid chain; its full sequence is MAAAAGGAASRRGAGRPCPFSIEHILSSLPERSLPARAACPPQPAGRQSPAKPEEPGAPEAAPCACCCCCGPRAAPCGPPEAAAGLGARLAWPLRLGPAVPLSLGAPAGGSGALPGAVGPGSQRRTRRHRTIFSEEQLQALEALFVQNQYPDVSTRERLAGRIRLREERVEVWFKNRRAKWRHQKRASASARLLPGVKKSPKGSC.

2 disordered regions span residues 33–58 and 185–205; these read SLPARAACPPQPAGRQSPAKPEEPGA and KRASASARLLPGVKKSPKGSC. Residues 126-185 constitute a DNA-binding region (homeobox); it reads TRRHRTIFSEEQLQALEALFVQNQYPDVSTRERLAGRIRLREERVEVWFKNRRAKWRHQK.

This sequence belongs to the paired homeobox family. Bicoid subfamily. As to expression, detected in adult testis and pituitary, and in 9-10 week fetal tissue (thorax). Probably expressed in other tissues at low levels.

Its subcellular location is the nucleus. Its function is as follows. May have a role in development. May regulate its own transcription. May bind the bicoid consensus sequence TAATCC. In Homo sapiens (Human), this protein is Homeobox protein goosecoid-2 (GSC2).